We begin with the raw amino-acid sequence, 101 residues long: CLAVATA3/ESR (CLE)-related protein 18 (101 aa).

The N-terminal stretch at 1-25 is a signal peptide; the sequence is MHLLKGGVVLIITLILFLITSSIVA. A disordered region spans residues 37-58; the sequence is RQIPTGPDPLHNPPQPSPKHHH. Pro40 and Pro43 each carry hydroxyproline. Pro residues predominate over residues 42 to 53; it reads GPDPLHNPPQPS. Residue Pro43 is glycosylated (O-linked (Ara...) hydroxyproline). A Sulfotyrosine modification is found at Tyr76. Position 84 is a hydroxyproline (Pro84).

Belongs to the CLV3/ESR signal peptide family. Post-translationally, the tyrosine sulfation is critical for the function of the peptide. In terms of processing, the O-glycosylation (arabinosylation) of the hydroxyproline Pro-43 enhances binding affinity of the CLE18p peptide for its receptor. Expressed in roots, leaves, siliques and seedlings.

The protein resides in the secreted. The protein localises to the extracellular space. Functionally, root growth factor that regulates the pattern of root growth and lateral root development by modulating the length and the number of cortical cells in the root apical meristem (RAM), and the anticlinal asymmetric cell divisions in lateral root initiation cells. In terms of biological role, extracellular signal peptide that regulates cell fate. Represses root apical meristem maintenance. Root growth factor that regulates the pattern of root growth and lateral root development. Regulates the transition of protophloem cells from proliferation to differentiation, thus impinging on postembryonic growth capacity of the root meristem; this signaling pathway requires CRN and CLV2. This chain is CLAVATA3/ESR (CLE)-related protein 18, found in Arabidopsis thaliana (Mouse-ear cress).